The primary structure comprises 71 residues: UPF0499 protein ACLA_083080 (71 aa).

The signal sequence occupies residues 1 to 18; sequence MKFLNILTLAFITGMASA. 3 disulfides stabilise this stretch: Cys44–Cys58, Cys48–Cys61, and Cys54–Cys68.

Belongs to the UPF0499 family.

The protein resides in the secreted. The polypeptide is UPF0499 protein ACLA_083080 (Aspergillus clavatus (strain ATCC 1007 / CBS 513.65 / DSM 816 / NCTC 3887 / NRRL 1 / QM 1276 / 107)).